Here is a 164-residue protein sequence, read N- to C-terminus: Mineralocorticoid receptor (164 aa).

The NR LBD domain maps to 1–162 (QYSWMCLSSF…EFPRCWWRSS (162 aa)). Residues R15 and T143 each contribute to the 21-hydroxyprogesterone site. Aldosterone is bound by residues R15 and T143. Residues R15 and T143 each contribute to the progesterone site.

It belongs to the nuclear hormone receptor family. NR3 subfamily. Heteromultimeric cytoplasmic complex with HSP90, HSP70, and FKBP4, in the absence of ligand. After ligand binding, it translocates to the nucleus and binds to DNA as a homodimer and as a heterodimer with NR3C1. Binds the coactivator NCOA2. May interact with HSD11B2 in the absence of ligand. Binds the coactivators NCOA1, TIF1 and NRIP1. Phosphorylated.

It localises to the cytoplasm. The protein localises to the nucleus. It is found in the endoplasmic reticulum membrane. Its function is as follows. Receptor for both mineralocorticoids (MC) such as aldosterone and glucocorticoids (GC) such as corticosterone or cortisol. Binds to mineralocorticoid response elements (MRE) and transactivates target genes. The effect of MC is to increase ion and water transport and thus raise extracellular fluid volume and blood pressure and lower potassium levels. The polypeptide is Mineralocorticoid receptor (NR3C2) (Sus scrofa (Pig)).